The sequence spans 221 residues: Protein-L-isoaspartate O-methyltransferase (221 aa).

Ser-68 is a catalytic residue.

The protein belongs to the methyltransferase superfamily. L-isoaspartyl/D-aspartyl protein methyltransferase family.

Its subcellular location is the cytoplasm. The catalysed reaction is [protein]-L-isoaspartate + S-adenosyl-L-methionine = [protein]-L-isoaspartate alpha-methyl ester + S-adenosyl-L-homocysteine. Its function is as follows. Catalyzes the methyl esterification of L-isoaspartyl residues in peptides and proteins that result from spontaneous decomposition of normal L-aspartyl and L-asparaginyl residues. It plays a role in the repair and/or degradation of damaged proteins. The polypeptide is Protein-L-isoaspartate O-methyltransferase (Desulfosudis oleivorans (strain DSM 6200 / JCM 39069 / Hxd3) (Desulfococcus oleovorans)).